We begin with the raw amino-acid sequence, 632 residues long: 1-deoxy-D-xylulose-5-phosphate synthase (632 aa).

Thiamine diphosphate is bound by residues His-75 and 117–119 (GHA). Asp-146 lines the Mg(2+) pocket. Residues 147-148 (AA), Asn-175, and Glu-370 each bind thiamine diphosphate. Asn-175 is a Mg(2+) binding site.

This sequence belongs to the transketolase family. DXPS subfamily. In terms of assembly, homodimer. The cofactor is Mg(2+). Requires thiamine diphosphate as cofactor.

It carries out the reaction D-glyceraldehyde 3-phosphate + pyruvate + H(+) = 1-deoxy-D-xylulose 5-phosphate + CO2. It participates in metabolic intermediate biosynthesis; 1-deoxy-D-xylulose 5-phosphate biosynthesis; 1-deoxy-D-xylulose 5-phosphate from D-glyceraldehyde 3-phosphate and pyruvate: step 1/1. In terms of biological role, catalyzes the acyloin condensation reaction between C atoms 2 and 3 of pyruvate and glyceraldehyde 3-phosphate to yield 1-deoxy-D-xylulose-5-phosphate (DXP). This is 1-deoxy-D-xylulose-5-phosphate synthase from Chlamydia muridarum (strain MoPn / Nigg).